The following is a 798-amino-acid chain: MAPPSITKTATQQDVISTVDIGNSPLLSISLDQSRNFLVNGHPFLTQVPPNITTTTTSTPSPFLDFKSNKDTIANNNNTLQQQGCFVGFNTTEAKSHHVVPLGKLKGIKFTSIFRFKVWWTTHWVGTNGHELQHETQILILDKNISLGRPYVLLLPILENSFRTSLQPGLNDYVDMSVESGSTHVTGSTFKACLYLHLSNDPYRLVKEAVKVIQTKLGTFKTLEEKTPPSIIEKFGWCTWDAFYLKVHPKGVWEGVKALTDGGCPPGFVIIDDGWQSISHDDDDPVTERDGMNRTSAGEQMPCRLIKYEENYKFREYENGDNGGKKGLVGFVRDLKEEFRSVESVYVWHALCGYWGGVRPKVCGMPEAKVVVPKLSPGVKMTMEDLAVDKIVENGVGLVPPNLAQEMFDGIHSHLESAGIDGVKVDVIHLLELLSEEYGGRVELAKAYYKALTSSVNKHFKGNGVIASMEHCNDFFLLGTEAISLGRVGDDFWCCDPSGDPNGTYWLQGCHMVHCAYNSLWMGNFIHPDWDMFQSTHPCAEFHAASRAISGGPVYVSDCVGNHNFKLLKSFVLPDGSILRCQHYALPTRDCLFEDPLHNGKTMLKIWNLNKYAGVLGLFNCQGGGWCPETRRNKSASEFSHAVTCYASPEDIEWCNGKTPMDIKGVDVFAVYFFKEKKLSLMKCSDRLEVSLEPFSFELMTVSPLKVFSKRLIQFAPIGLVNMLNSGGAVQSLEFDDSASLVKIGVRGCGELSVFASEKPVCCKIDGVSVEFDYEDKMVRVQILWPGSSTLSLVEFLF.

Belongs to the glycosyl hydrolases 36 family.

It catalyses the reaction alpha-D-galactosyl-(1-&gt;3)-1D-myo-inositol + sucrose = raffinose + myo-inositol. Its activity is regulated as follows. Inhibited by 1-deoxygalactonojirimycin. Not inhibited by stachyose. Strong inhibition of the hydrolytic activity by sucrose. Its function is as follows. Transglycosidase operating by a ping-pong reaction mechanism. Involved in the synthesis of raffinose, a major soluble carbohydrate in seeds, roots and tubers. Able to utilize D-ononitol and D-pinitol as acceptors. May also act as a glycoside hydrolase. This Pisum sativum (Garden pea) protein is Galactinol--sucrose galactosyltransferase (RFS).